A 514-amino-acid polypeptide reads, in one-letter code: ATP synthase subunit alpha (514 aa).

An ATP-binding site is contributed by 170 to 177; it reads GDRQTGKT.

Belongs to the ATPase alpha/beta chains family. In terms of assembly, F-type ATPases have 2 components, CF(1) - the catalytic core - and CF(0) - the membrane proton channel. CF(1) has five subunits: alpha(3), beta(3), gamma(1), delta(1), epsilon(1). CF(0) has three main subunits: a(1), b(2) and c(9-12). The alpha and beta chains form an alternating ring which encloses part of the gamma chain. CF(1) is attached to CF(0) by a central stalk formed by the gamma and epsilon chains, while a peripheral stalk is formed by the delta and b chains.

The protein localises to the cell inner membrane. It carries out the reaction ATP + H2O + 4 H(+)(in) = ADP + phosphate + 5 H(+)(out). Its function is as follows. Produces ATP from ADP in the presence of a proton gradient across the membrane. The alpha chain is a regulatory subunit. The chain is ATP synthase subunit alpha from Acidithiobacillus ferridurans.